A 261-amino-acid polypeptide reads, in one-letter code: Intermembrane phospholipid transport system permease protein MlaE (261 aa).

The Cytoplasmic segment spans residues 1 to 12; that stretch reads MIVNFISALGKQ. Residues 13–33 traverse the membrane as a helical segment; it reads VIDFFRALGRAGFMLFGALIG. The Periplasmic segment spans residues 34-49; it reads KPQIRKHFPLLVKQMH. Residues 50 to 70 traverse the membrane as a helical segment; the sequence is VLGVQSLLIILLSGLFIGMVL. At 71 to 147 the chain is on the cytoplasmic side; it reads GLQGYVVLID…DPLRRVIAPR (77 aa). Residues 148–168 form a helical membrane-spanning segment; the sequence is FWAGVISMPVLSILFIAIGIW. The Periplasmic portion of the chain corresponds to 169-198; sequence GGSLVGVDWKGVDSGSFWSVMQNSVSWSYD. The helical transmembrane segment at 199–219 threads the bilayer; it reads ILNGFIKAVFFAVAVTWIALF. At 220-238 the chain is on the cytoplasmic side; the sequence is NGYDCMPTSEGISQATTRT. The helical transmembrane segment at 239–259 threads the bilayer; the sequence is VVHASLVVLGLDFILTAIMFG. The Periplasmic portion of the chain corresponds to 260-261; that stretch reads AG.

It belongs to the MlaE permease family. In terms of assembly, the complex is composed of two ATP-binding proteins (MlaF), two transmembrane proteins (MlaE), two cytoplasmic solute-binding proteins (MlaB) and six periplasmic solute-binding proteins (MlaD).

It localises to the cell inner membrane. Part of the ABC transporter complex MlaFEDB, which is involved in a phospholipid transport pathway that maintains lipid asymmetry in the outer membrane by retrograde trafficking of phospholipids from the outer membrane to the inner membrane. Probably responsible for the translocation of the substrate across the membrane. This is Intermembrane phospholipid transport system permease protein MlaE from Haemophilus influenzae (strain ATCC 51907 / DSM 11121 / KW20 / Rd).